The primary structure comprises 428 residues: FAD-dependent monooxygenase kojA (428 aa).

FAD-binding positions include 52-60 and 328-329; these read RLHKGPHYP and SV.

It belongs to the aromatic-ring hydroxylase family. FAD is required as a cofactor.

Probable FAD-dependent monooxygenase; part of the gene cluster that mediates the biosynthesis of 5-hydroxy-2-hydroxymethyl-1,4-pyrone, also know as kojic acid, a by-product in the fermentation process of malting rice that acts as a chelation agent. Glucose might be converted to kojic acid by a combination of dehydrogenase and dehydratase reactions involving kojA and probably additional enzymes. The protein is FAD-dependent monooxygenase kojA of Aspergillus flavus (strain ATCC 200026 / FGSC A1120 / IAM 13836 / NRRL 3357 / JCM 12722 / SRRC 167).